The following is a 513-amino-acid chain: Xylose import ATP-binding protein XylG (513 aa).

ABC transporter domains lie at 5 to 242 (LEMK…VGRE) and 259 to 505 (LRIE…LRSE). 37-44 (GENGSGKS) contacts ATP.

The protein belongs to the ABC transporter superfamily. Xylose importer (TC 3.A.1.2.4) family. In terms of assembly, the complex is composed of two ATP-binding proteins (XylG), two transmembrane proteins (XylH) and a solute-binding protein (XylF).

The protein localises to the cell inner membrane. It catalyses the reaction D-xylose(out) + ATP + H2O = D-xylose(in) + ADP + phosphate + H(+). Functionally, part of the ABC transporter complex XylFGH involved in xylose import. Responsible for energy coupling to the transport system. This chain is Xylose import ATP-binding protein XylG, found in Shigella flexneri serotype 5b (strain 8401).